We begin with the raw amino-acid sequence, 409 residues long: MAREKFERIKPHINIGTIGHVDHGKTTLTAAITMALASIGNTKGKNYADIDSAPEEKARGITINTTHVEYETAKRHYAHVDCPGHADYIKNMITGAAQMDGAILVVSGADGPMPQTREHIVLAKQVGVPSMVVFINKEDQVDDPEILELVELEVRDLLTSYKFEGEEVPVITGSALLALEAFIKNPKILKGENPWVDKIYNLMDSVDSYIPTPVREIDKPFLMAIEDVFSISGRGTVATGRIERGKIKMGDSIEIIGGSLRKTTTVTGIEMFQKTLTDGVAGDNVGILMRGIQKKEIDRGMVLTKPKSIDPLTSFEAQVYLLTKEEGGRSKGFTIGYRPQFYVRTTDVTGAILNMLSDDNTPLKIASPGDRITMSVKLIQPIALEKNMRFAIREGGKTVGAGVVSKLIN.

Residues 10–214 (KPHINIGTIG…SVDSYIPTPV (205 aa)) form the tr-type G domain. Residues 19 to 26 (GHVDHGKT) form a G1 region. Position 19 to 26 (19 to 26 (GHVDHGKT)) interacts with GTP. Residue threonine 26 coordinates Mg(2+). The interval 60–64 (GITIN) is G2. A G3 region spans residues 81-84 (DCPG). Residues 81–85 (DCPGH) and 136–139 (NKED) contribute to the GTP site. The segment at 136-139 (NKED) is G4. A G5 region spans residues 174 to 176 (SAL).

It belongs to the TRAFAC class translation factor GTPase superfamily. Classic translation factor GTPase family. EF-Tu/EF-1A subfamily.

Its subcellular location is the plastid. The enzyme catalyses GTP + H2O = GDP + phosphate + H(+). GTP hydrolase that promotes the GTP-dependent binding of aminoacyl-tRNA to the A-site of ribosomes during protein biosynthesis. This is Elongation factor Tu, plastid (tufA) from Helicosporidium sp. subsp. Simulium jonesii (Green alga).